Here is a 304-residue protein sequence, read N- to C-terminus: HTH-type transcriptional activator CmpR (304 aa).

Residues 1–61 (MKNATLHQFE…EQIGRKIYLT (61 aa)) form the HTH lysR-type domain. The segment at residues 21 to 40 (FTKAAEELFLTQPTVSQQMK) is a DNA-binding region (H-T-H motif).

The protein belongs to the LysR transcriptional regulatory family.

Its subcellular location is the cytoplasm. Functionally, activates transcription of the cmpABCD operon under carbon dioxide-limited conditions. Specifically binds to the cmpR-cmpA intergenic region. This chain is HTH-type transcriptional activator CmpR (cmpR), found in Synechocystis sp. (strain ATCC 27184 / PCC 6803 / Kazusa).